Reading from the N-terminus, the 588-residue chain is MWILVSWLALVARLVAGTQCPDGQFCPVACCLDQGGANYSCCNPLLDTWPIITSRRLDGSCQIRDHCPDGYSCLLTVSGTSSCCPFSEGVSCDDGQHCCPRGFHCSADGKSCSQISDSLLGAVQCPGSQFECPDSATCCIMIDGSWGCCPMPQASCCEDRVHCCPHGASCDLVHTRCISPTGTHPLLKKFPAQRTNRAVASFSVVCPDAKTQCPDDSTCCELPTGKYGCCPMPNAICCSDHLHCCPQDTVCDLIQSKCISKDYTTDLMTKLPGYPVNEVKCDLEVSCPDGYTCCRLNTGAWGCCPFTKAVCCEDHIHCCPAGFQCHTETGTCELGVLQVPWMKKVTASLSLPDPQILKNDVPCDDFSSCPSNNTCCRLSSGDWGCCPMPEAVCCLDHQHCCPQGFKCMDEGYCQKGDRMVAGLEKMPVRQTTLLQHGDIGCDQHTSCPVGQTCCPSLKGSWACCQLPHAVCCEDRQHCCPAGYTCNVKARTCEKDAGSVQPSMDLTFGSKVGNVECGAGHFCHDNQSCCKDSQGGWACCPYVKGVCCRDGRHCCPIGFHCSAKGTKCLRKKTPRWDILLRDPAPRPLL.

A signal peptide spans 1-17; the sequence is MWILVSWLALVARLVAG. Residue Asn-38 is glycosylated (N-linked (GlcNAc...) asparagine). 12 disulfides stabilise this stretch: Cys-125–Cys-138, Cys-132–Cys-148, Cys-281–Cys-293, Cys-287–Cys-303, Cys-294–Cys-311, Cys-304–Cys-318, Cys-312–Cys-325, Cys-319–Cys-332, Cys-363–Cys-375, Cys-369–Cys-385, Cys-394–Cys-407, and Cys-401–Cys-413. An N-linked (GlcNAc...) asparagine glycan is attached at Asn-372. A glycan (N-linked (GlcNAc...) asparagine) is linked at Asn-525.

It belongs to the granulin family. In terms of assembly, progranulin is secreted as a homodimer. Interacts with SLPI; interaction protects progranulin from proteolysis. Interacts (via region corresponding to granulin-7 peptide) with CTSD; stabilizes CTSD and increases its proteolytic activity. Interacts (via region corresponding to granulin-7 peptide) with SORT1; this interaction mediates endocytosis and lysosome delivery of progranulin; interaction occurs at the neuronal cell surface in a stressed nervous system. Interacts with PSAP; facilitates lysosomal delivery of progranulin from the extracellular space and the biosynthetic pathway. Forms a complex with PSAP and M6PR; PSAP bridges the binding between progranulin and M6PR. Forms a complex with PSAP and SORT1; progranulin bridges the interaction between PSAP and SORT1; facilitates lysosomal targeting of PSAP via SORT1; interaction enhances PSAP uptake in primary cortical neurons. Interacts (via regions corresponding to granulin-2 and granulin-7 peptides) with GBA1; this interaction prevents aggregation of GBA1-SCARB2 complex via interaction with HSPA1A upon stress. Interacts (via region corresponding to granulin-7 peptide) with HSPA1A; mediates recruitment of HSPA1A to GBA1 and prevents GBA1 aggregation in response to stress. Post-translationally, cleaved by ELANE; proteolysis is blocked by SLPI and is concentration- and time-dependent and induces CXCL8/IL-8 production; granulin-3 and granulin-4 are resistant to ELANE. Cleaved by CTSL in lysosome thus regulating the maturation and turnover of progranulin within the lysosome. In terms of tissue distribution, ubiquitous; most abundant in the spleen and several tissues of endocrine significance.

The protein localises to the secreted. Its subcellular location is the lysosome. Secreted protein that acts as a key regulator of lysosomal function and as a growth factor involved in inflammation, wound healing and cell proliferation. Regulates protein trafficking to lysosomes, and also the activity of lysosomal enzymes. Also facilitates the acidification of lysosomes, causing degradation of mature CTSD by CTSB. In addition, functions as a wound-related growth factor that acts directly on dermal fibroblasts and endothelial cells to promote division, migration and the formation of capillary-like tubule structures. Also promotes epithelial cell proliferation by blocking TNF-mediated neutrophil activation preventing release of oxidants and proteases. Moreover, modulates inflammation in neurons by preserving neurons survival, axonal outgrowth and neuronal integrity. In terms of biological role, inhibits epithelial cell proliferation and induces epithelial cells to secrete IL-8. Functionally, stabilizes CTSD through interaction with CTSD leading to maintain its aspartic-type peptidase activity. The polypeptide is Progranulin (Grn) (Rattus norvegicus (Rat)).